The primary structure comprises 121 residues: SLWEWGQMILKETGKNPFPYYGAYGCYCGWGGRRKPKDATDRCCFVHDCCRYKKLTGCPKTNDRYSYSRLDYTIVCGEDDPCKEICECDKAAAVCFRENLRTYNKKYMAHLRVLCKKDKPC.

Residues Tyr27, Gly29, and Gly31 each coordinate Ca(2+). 6 cysteine pairs are disulfide-bonded: Cys28-Cys44, Cys43-Cys95, Cys49-Cys121, Cys50-Cys88, Cys58-Cys82, and Cys76-Cys86. His47 is an active-site residue. Residue Asp48 coordinates Ca(2+). Residue Asp89 is part of the active site.

The protein belongs to the phospholipase A2 family. Group II subfamily. D49 sub-subfamily. As to quaternary structure, homodimer; non-covalently linked. The cofactor is Ca(2+). As to expression, expressed by the venom gland.

Its subcellular location is the secreted. The catalysed reaction is a 1,2-diacyl-sn-glycero-3-phosphocholine + H2O = a 1-acyl-sn-glycero-3-phosphocholine + a fatty acid + H(+). In terms of biological role, snake venom phospholipase A2 (PLA2) that exhibits myotoxin and anticoagulant activity. Displays edema-inducing activities in mouse paw. Also displays cytotoxic activity against some cell lines and myotubes, and antimicrobial activities against E.coli, C.albicans and Leishmania. PLA2 catalyzes the calcium-dependent hydrolysis of the 2-acyl groups in 3-sn-phosphoglycerides. This chain is Basic phospholipase A2 BbTX-III, found in Bothrops brazili (Brazil's lancehead).